The sequence spans 222 residues: Large ribosomal subunit protein uL4 (222 aa).

The segment at 50–72 (TRGRSEVSHSTRKPFRQKGTGNA) is disordered.

The protein belongs to the universal ribosomal protein uL4 family. In terms of assembly, part of the 50S ribosomal subunit.

In terms of biological role, one of the primary rRNA binding proteins, this protein initially binds near the 5'-end of the 23S rRNA. It is important during the early stages of 50S assembly. It makes multiple contacts with different domains of the 23S rRNA in the assembled 50S subunit and ribosome. Functionally, forms part of the polypeptide exit tunnel. The sequence is that of Large ribosomal subunit protein uL4 from Chlamydia muridarum (strain MoPn / Nigg).